Reading from the N-terminus, the 89-residue chain is Small ribosomal subunit protein uS15 (89 aa).

It belongs to the universal ribosomal protein uS15 family. As to quaternary structure, part of the 30S ribosomal subunit. Forms a bridge to the 50S subunit in the 70S ribosome, contacting the 23S rRNA.

One of the primary rRNA binding proteins, it binds directly to 16S rRNA where it helps nucleate assembly of the platform of the 30S subunit by binding and bridging several RNA helices of the 16S rRNA. Functionally, forms an intersubunit bridge (bridge B4) with the 23S rRNA of the 50S subunit in the ribosome. This chain is Small ribosomal subunit protein uS15, found in Bordetella avium (strain 197N).